We begin with the raw amino-acid sequence, 207 residues long: Large ribosomal subunit protein uL4 (207 aa).

Residues 54–76 (RSAVRGGGRKPWRQKGTGRARQG) form a disordered region. Residues 60–71 (GGRKPWRQKGTG) show a composition bias toward basic residues.

This sequence belongs to the universal ribosomal protein uL4 family. In terms of assembly, part of the 50S ribosomal subunit.

Functionally, one of the primary rRNA binding proteins, this protein initially binds near the 5'-end of the 23S rRNA. It is important during the early stages of 50S assembly. It makes multiple contacts with different domains of the 23S rRNA in the assembled 50S subunit and ribosome. Forms part of the polypeptide exit tunnel. The protein is Large ribosomal subunit protein uL4 of Staphylococcus haemolyticus (strain JCSC1435).